Here is a 184-residue protein sequence, read N- to C-terminus: Cyclin-dependent kinase inhibitor 1 (184 aa).

Low complexity predominate over residues 85–98 (ISSTTLTPLSSPST). The disordered stretch occupies residues 85–184 (ISSTTLTPLS…IRTRSSCSPY (100 aa)).

The protein belongs to the CDI family. In terms of assembly, interacts with cyd-1; the interaction is direct. In terms of tissue distribution, in embryos, expression is first seen in pharyngeal primordium and later in all differentiating cells. Post embryonic expression corresponds to developmental patterns of cell cycle progression in many tissues including sex myoblasts, distal tip cells, vulval cells, seam cells, neurons, intestine cells and hypodermal cells.

The protein resides in the nucleus. In terms of biological role, negative cell-cycle regulator that functions at the G1-to-S-phase transition. Required for suspension of the cell cycle in dauer larvae and starved L1 larvae. In vulval precursor cells (VPCs), a pathway of heterochronic genes acts via cki-1 to maintain VPCs in G1 during the L2 larval stage. Cul-2 may function in ubiquitin-mediated degradation by targeting cki-1 for degradation. Involved in distal tip cell development by repressing and modulating cye-1/cdk-2 activity levels in Z1.aa/Z4.pp and in Z1.ap/Z4.pa. This is Cyclin-dependent kinase inhibitor 1 from Caenorhabditis elegans.